The following is a 190-amino-acid chain: Adenylate kinase (190 aa).

12–17 (GSGKTT) provides a ligand contact to ATP. The tract at residues 34 to 63 (STGDLLREEVASGSEYGKTIDSFISKGNLV) is NMP. Residues threonine 35, arginine 40, 61–63 (NLV), 88–91 (GYPR), and glutamine 95 each bind AMP. Residues 130–136 (GRARGAD) are LID. Arginine 131 is an ATP binding site. AMP is bound by residues arginine 133 and arginine 145. Residue arginine 173 participates in ATP binding.

The protein belongs to the adenylate kinase family. Monomer.

Its subcellular location is the cytoplasm. The catalysed reaction is AMP + ATP = 2 ADP. It functions in the pathway purine metabolism; AMP biosynthesis via salvage pathway; AMP from ADP: step 1/1. Functionally, catalyzes the reversible transfer of the terminal phosphate group between ATP and AMP. Plays an important role in cellular energy homeostasis and in adenine nucleotide metabolism. The sequence is that of Adenylate kinase from Helicobacter hepaticus (strain ATCC 51449 / 3B1).